Here is a 688-residue protein sequence, read N- to C-terminus: Potassium-transporting ATPase ATP-binding subunit (688 aa).

The next 4 helical transmembrane spans lie at 35–55 (VMFV…QALG), 62–82 (AGFI…ANFA), 219–239 (IALT…IVTL), and 260–280 (VLIA…LSAI). Catalysis depends on Asp-313, which acts as the 4-aspartylphosphate intermediate. ATP is bound by residues Asp-350, Glu-354, 383 to 390 (FSAHTRMS), and Lys-401. Residues Asp-524 and Asp-528 each coordinate Mg(2+). 3 consecutive transmembrane segments (helical) span residues 594-614 (FAII…LNVM), 622-642 (AILS…PLAL), and 668-688 (VIVP…VGLA).

This sequence belongs to the cation transport ATPase (P-type) (TC 3.A.3) family. Type IA subfamily. The system is composed of three essential subunits: KdpA, KdpB and KdpC.

The protein resides in the cell inner membrane. The catalysed reaction is K(+)(out) + ATP + H2O = K(+)(in) + ADP + phosphate + H(+). Functionally, part of the high-affinity ATP-driven potassium transport (or Kdp) system, which catalyzes the hydrolysis of ATP coupled with the electrogenic transport of potassium into the cytoplasm. This subunit is responsible for energy coupling to the transport system and for the release of the potassium ions to the cytoplasm. This chain is Potassium-transporting ATPase ATP-binding subunit, found in Dechloromonas aromatica (strain RCB).